A 493-amino-acid polypeptide reads, in one-letter code: MFKFALTQTLCLAGSLSLAQHNPHWWGNRNTIVHLFEWKWSDIAQECESFLGPRGFAGVQVSPVNENIIAAGRPWWERYQPISYKLTTRSGNEEEFGDMVRRCNDVGVRIYVDVLLNHMSGDFDGVAVGTAGTEAEPRKKSFPGVPYTAQDFHPTCEITDWNDRFQVQQCELVGLKDLDQSSDWVRSKLIEFLDHLIELGVAGFRVDAAKHMASEDLEYIYSSLSNLNIDHGFPHNSRPFIFQEVIDHGHETVSRDEYKDLGAVTEFRFSEEIGNAFRGNNALKWLQSWGTGWGFLPSGQALTFVDNHDNQRDAGAVLNYKSPRQYKMATAFHLAYPYGISRVMSSFAFDDHDTPPPQDAQERIISPEFDEDGACVNGWICEHRWRQIYAMVGFKNAVRDAEITGWWDNGDNQISFCRGNKGFLAFNNNLYDLSQDLNTCLPAGTYCDVISGSLIDGSCTGKSVTVNDNGYGYIHIGSDDFDGVLALHVDAKV.

The N-terminal stretch at 1–19 (MFKFALTQTLCLAGSLSLA) is a signal peptide. Gln20 carries the post-translational modification Pyrrolidone carboxylic acid. Cys47 and Cys103 are oxidised to a cystine. Residues Asn117, Gln168, and Asp177 each contribute to the Ca(2+) site. An intrachain disulfide couples Cys156 to Cys170. Residue Arg205 participates in chloride binding. Asp207 acts as the Nucleophile in catalysis. His211 provides a ligand contact to Ca(2+). Glu244 serves as the catalytic Proton donor. Chloride-binding residues include Asn307 and Arg342. 3 disulfides stabilise this stretch: Cys375/Cys381, Cys417/Cys440, and Cys447/Cys459.

Belongs to the glycosyl hydrolase 13 family. Monomer. Ca(2+) is required as a cofactor. It depends on chloride as a cofactor.

The protein resides in the secreted. The enzyme catalyses Endohydrolysis of (1-&gt;4)-alpha-D-glucosidic linkages in polysaccharides containing three or more (1-&gt;4)-alpha-linked D-glucose units.. In Drosophila mauritiana (Fruit fly), this protein is Alpha-amylase-related protein (Amyrel).